The sequence spans 116 residues: G antigen 2A (116 aa).

The interval 1–116 is disordered; it reads MSWRGRSTYR…PEEGEKQSQC (116 aa). Composition is skewed to acidic residues over residues 31–44 and 86–95; these read FSDE…EEGE and ECEDGPDGQE. A compositionally biased stretch (basic and acidic residues) spans 102–116; it reads EEVKTPEEGEKQSQC.

It belongs to the GAGE family.

The protein is G antigen 2A (GAGE2A) of Homo sapiens (Human).